The chain runs to 707 residues: Molybdenum cofactor sulfurase (707 aa).

K206 carries the post-translational modification N6-(pyridoxal phosphate)lysine. C365 is an active-site residue. Residues 558 to 705 enclose the MOSC domain; it reads QWLENALDMT…VEAGSAVRFF (148 aa).

It belongs to the class-V pyridoxal-phosphate-dependent aminotransferase family. MOCOS subfamily. Pyridoxal 5'-phosphate serves as cofactor.

It catalyses the reaction Mo-molybdopterin + L-cysteine + AH2 = thio-Mo-molybdopterin + L-alanine + A + H2O. It functions in the pathway cofactor biosynthesis; molybdopterin biosynthesis. Functionally, sulfurates the molybdenum cofactor. Sulfation of molybdenum is essential for xanthine dehydrogenase (XDH) and aldehyde oxidase (ADO) enzymes in which molybdenum cofactor is liganded by 1 oxygen and 1 sulfur atom in active form. This is Molybdenum cofactor sulfurase (mocs-1) from Caenorhabditis briggsae.